The sequence spans 90 residues: MLKRMYVKVYGIVQGVGFRRYVQIHAARLGIKGYAKNLPDGSVEIVAEGYEEALQKLLEYIKRGPPLSRVEKIEYRFYEYKGEFNNFDTY.

The region spanning 4–90 is the Acylphosphatase-like domain; it reads RMYVKVYGIV…KGEFNNFDTY (87 aa). Catalysis depends on residues arginine 19 and asparagine 37.

Belongs to the acylphosphatase family.

It catalyses the reaction an acyl phosphate + H2O = a carboxylate + phosphate + H(+). The protein is Acylphosphatase (acyP) of Sulfurisphaera tokodaii (strain DSM 16993 / JCM 10545 / NBRC 100140 / 7) (Sulfolobus tokodaii).